The chain runs to 1147 residues: MRRHSSGSSEDDDASPVEAPHANSSRFSAKDSRSSAHPTTKLDHNRNADRPPSFSISRRSSSINWRLPESRNGNGTVEKRPSPERTSPSSPLGLIMTANGELRTKEVEKTPETVIPARRPPWRSPWAITFSALVAAIVGIGFLVAVLHSSVTRQLDPKGCRMSYMRPSYAKLNEFDTEHTRLASKYSLYLYREQDIDRDTKVRGVPVLFIPGNAGSYKQVRPIAAEAANYFHNVLQHDESAMNAGTRNLDFFTVDFNEDITAFHGQTLLDQAEYLNEAVRYILSLYLDPRVADRDPDLPDPTSVIVLGHSMGGIVARTMLIMPNFQSHSINTIITMSAPHARPPVSFDSQSVQTYKDINDYWRRAYSQQWANDNPLWHVTLVSIAGGGLDTVVPSDYASVESLVPDTHGFTVFTSTIPNVWTSMDHQAILWCDQFRKVVAQAIYDVVDVHRATQTKPRAERMRVFKKWFLTGMETIAEKAAPRSEPTTLLTVDDNSDSIIAEGERLVLRNLGTAGTVRAHLMPIPPSGSPGMKRFTLLTDTKLDKPGEHGKLEVLFCSVIPSQPSQSWAGFPSQMDLSKGSTGSTRLACRSAAPDVVSLPASTSSTQFPFYLNGEKEITPFSYLEYGVDDIAEHQFVAVVEKTTAPTPGFVVAEFSDYTQSHRTRHISLRSLLTFGMKFHLPAERPMVSEVKVPSLQSSLLAYNLRISHQDCNGDSELFAPLVRQYLAEPYESKYFVNAREATVSLHGVAPYVPPPLTGKLDENGLSFQFWTDPTCSSSIHIELTADFMGSLGKLYMRYRTVFAAFPLFIVALVLRKQFRVYDTTGMFIPFLEGLDLCLRQSIPLMLASLTLLTLSTGIMAPASNASFWHWRNGTSSIMDFQHNDLLIGTEDPLFLFLIPLIAIVCVGVCTVFNYMALTLTHLLGVLASLVTFHPGWIGNEDRKKTTPAAFFSPSPRRRMITTAVLLLLVTTMVPYQFAYLVACLVQLMTTVRAQRIASELRSTANSNFYNYTHSIFILMLWILPINLPTFVVWVHNLAVHWLTPFSSHHNVLSVMPFIVLVETLTTGKMIPRMGSRLKHVTSLLLFGMAVYAAVYGVTYAYTLHYVANFLAFWLAIVHSTSDSWSLAGLTHLYSGDAGIRKRGKEP.

Residues 1–94 form a disordered region; sequence MRRHSSGSSE…RTSPSSPLGL (94 aa). Asparagine 23 carries an N-linked (GlcNAc...) asparagine glycan. Positions 28 to 49 are enriched in basic and acidic residues; sequence SAKDSRSSAHPTTKLDHNRNAD. Positions 50-63 are enriched in low complexity; the sequence is RPPSFSISRRSSSI. Asparagine 74 carries N-linked (GlcNAc...) asparagine glycosylation. Residues 127–147 traverse the membrane as a helical segment; it reads AITFSALVAAIVGIGFLVAVL. Serine 310 is a catalytic residue. 2 helical membrane passes run 795–815 and 843–863; these read LYMR…ALVL and IPLM…MAPA. Asparagine 865 and asparagine 873 each carry an N-linked (GlcNAc...) asparagine glycan. Helical transmembrane passes span 893-913, 918-938, and 965-985; these read PLFL…CTVF, LTLT…PGWI, and VLLL…VACL. Asparagine 1011 carries N-linked (GlcNAc...) asparagine glycosylation. 3 helical membrane-spanning segments follow: residues 1015–1035, 1052–1072, and 1084–1104; these read SIFI…VVWV, VLSV…KMIP, and LLLF…AYTL.

This sequence belongs to the GPI inositol-deacylase family.

It is found in the endoplasmic reticulum membrane. In terms of biological role, involved in inositol deacylation of GPI-anchored proteins which plays important roles in the quality control and ER-associated degradation of GPI-anchored proteins. The polypeptide is GPI inositol-deacylase (BST1) (Chaetomium globosum (strain ATCC 6205 / CBS 148.51 / DSM 1962 / NBRC 6347 / NRRL 1970) (Soil fungus)).